A 217-amino-acid polypeptide reads, in one-letter code: 3,4-dihydroxy-2-butanone 4-phosphate synthase (217 aa).

D-ribulose 5-phosphate-binding positions include 37–38 (RE), aspartate 42, 150–154 (RRGHT), and glutamate 174. A Mg(2+)-binding site is contributed by glutamate 38. Histidine 153 contacts Mg(2+).

It belongs to the DHBP synthase family. Homodimer. Requires Mg(2+) as cofactor. It depends on Mn(2+) as a cofactor.

The enzyme catalyses D-ribulose 5-phosphate = (2S)-2-hydroxy-3-oxobutyl phosphate + formate + H(+). Its pathway is cofactor biosynthesis; riboflavin biosynthesis; 2-hydroxy-3-oxobutyl phosphate from D-ribulose 5-phosphate: step 1/1. Catalyzes the conversion of D-ribulose 5-phosphate to formate and 3,4-dihydroxy-2-butanone 4-phosphate. This Shewanella sediminis (strain HAW-EB3) protein is 3,4-dihydroxy-2-butanone 4-phosphate synthase.